The primary structure comprises 75 residues: UPF0154 protein MYPE400 (75 aa).

A helical membrane pass occupies residues 5-27; the sequence is IGLCLGLGIPISLIIGAVIGYYF.

Belongs to the UPF0154 family.

The protein localises to the membrane. The polypeptide is UPF0154 protein MYPE400 (Malacoplasma penetrans (strain HF-2) (Mycoplasma penetrans)).